The primary structure comprises 406 residues: 4-hydroxy-3-methylbut-2-en-1-yl diphosphate synthase (ferredoxin) (406 aa).

[4Fe-4S] cluster is bound by residues cysteine 315, cysteine 318, cysteine 349, and glutamate 356.

This sequence belongs to the IspG family. [4Fe-4S] cluster serves as cofactor.

It carries out the reaction (2E)-4-hydroxy-3-methylbut-2-enyl diphosphate + 2 oxidized [2Fe-2S]-[ferredoxin] + H2O = 2-C-methyl-D-erythritol 2,4-cyclic diphosphate + 2 reduced [2Fe-2S]-[ferredoxin] + H(+). It functions in the pathway isoprenoid biosynthesis; isopentenyl diphosphate biosynthesis via DXP pathway; isopentenyl diphosphate from 1-deoxy-D-xylulose 5-phosphate: step 5/6. Its function is as follows. Converts 2C-methyl-D-erythritol 2,4-cyclodiphosphate (ME-2,4cPP) into 1-hydroxy-2-methyl-2-(E)-butenyl 4-diphosphate. The protein is 4-hydroxy-3-methylbut-2-en-1-yl diphosphate synthase (ferredoxin) of Trichodesmium erythraeum (strain IMS101).